Reading from the N-terminus, the 785-residue chain is Tripartite terminase subunit 1 (785 aa).

The C3H1-type zinc finger occupies 201–229; sequence CAVCFEELCVTANQGATIARRLADRICNH. A disordered region spans residues 439 to 487; that stretch reads GGATGGAEEEEPRAAAEEGGRRRGAGTPASEDGERGPEPGAQGPESWGD. Basic and acidic residues predominate over residues 450–459; that stretch reads PRAAAEEGGR. 696 to 703 contributes to the ATP binding site; it reads FASVYRCG.

It belongs to the herpesviridae TRM1 protein family. As to quaternary structure, associates with TRM2 and TRM3 to form the tripartite terminase complex. Interacts with portal protein.

It is found in the host nucleus. Component of the molecular motor that translocates viral genomic DNA in empty capsid during DNA packaging. Forms a tripartite terminase complex together with TRM2 and TRM3 in the host cytoplasm. Once the complex reaches the host nucleus, it interacts with the capsid portal vertex. This portal forms a ring in which genomic DNA is translocated into the capsid. TRM1 carries an endonuclease activity that plays an important role for the cleavage of concatemeric viral DNA into unit length genomes. This is Tripartite terminase subunit 1 from Human herpesvirus 2 (strain HG52) (HHV-2).